Consider the following 339-residue polypeptide: Phenylalanine--tRNA ligase alpha subunit (339 aa).

Mg(2+) is bound at residue E254.

It belongs to the class-II aminoacyl-tRNA synthetase family. Phe-tRNA synthetase alpha subunit type 1 subfamily. Tetramer of two alpha and two beta subunits. Mg(2+) serves as cofactor.

Its subcellular location is the cytoplasm. It carries out the reaction tRNA(Phe) + L-phenylalanine + ATP = L-phenylalanyl-tRNA(Phe) + AMP + diphosphate + H(+). The chain is Phenylalanine--tRNA ligase alpha subunit from Clostridium tetani (strain Massachusetts / E88).